A 298-amino-acid polypeptide reads, in one-letter code: ATP synthase gamma chain (298 aa).

The protein belongs to the ATPase gamma chain family. F-type ATPases have 2 components, CF(1) - the catalytic core - and CF(0) - the membrane proton channel. CF(1) has five subunits: alpha(3), beta(3), gamma(1), delta(1), epsilon(1). CF(0) has three main subunits: a, b and c.

It is found in the cell inner membrane. Its function is as follows. Produces ATP from ADP in the presence of a proton gradient across the membrane. The gamma chain is believed to be important in regulating ATPase activity and the flow of protons through the CF(0) complex. The protein is ATP synthase gamma chain of Granulibacter bethesdensis (strain ATCC BAA-1260 / CGDNIH1).